A 454-amino-acid polypeptide reads, in one-letter code: Bifunctional protein GlmU (454 aa).

A pyrophosphorylase region spans residues 1 to 226; sequence MSLNVVILAA…PIETEGANNR (226 aa). Residues 8–11, lysine 22, glutamine 73, 78–79, 100–102, glycine 137, glutamate 151, asparagine 166, and asparagine 224 each bind UDP-N-acetyl-alpha-D-glucosamine; these read LAAG, GT, and YGD. A Mg(2+)-binding site is contributed by aspartate 102. Asparagine 224 is a Mg(2+) binding site. Residues 227–247 form a linker region; the sequence is VQLAALERAYQARRAEELMLA. The interval 248–454 is N-acetyltransferase; the sequence is GANLRDPARI…GWQRPVKKPK (207 aa). 2 residues coordinate UDP-N-acetyl-alpha-D-glucosamine: arginine 330 and lysine 348. Histidine 360 serves as the catalytic Proton acceptor. Residues tyrosine 363 and asparagine 374 each coordinate UDP-N-acetyl-alpha-D-glucosamine. Acetyl-CoA is bound by residues alanine 377, 383 to 384, serine 402, alanine 420, and arginine 437; that span reads NY.

The protein in the N-terminal section; belongs to the N-acetylglucosamine-1-phosphate uridyltransferase family. It in the C-terminal section; belongs to the transferase hexapeptide repeat family. Homotrimer. Mg(2+) is required as a cofactor.

The protein localises to the cytoplasm. It carries out the reaction alpha-D-glucosamine 1-phosphate + acetyl-CoA = N-acetyl-alpha-D-glucosamine 1-phosphate + CoA + H(+). It catalyses the reaction N-acetyl-alpha-D-glucosamine 1-phosphate + UTP + H(+) = UDP-N-acetyl-alpha-D-glucosamine + diphosphate. The protein operates within nucleotide-sugar biosynthesis; UDP-N-acetyl-alpha-D-glucosamine biosynthesis; N-acetyl-alpha-D-glucosamine 1-phosphate from alpha-D-glucosamine 6-phosphate (route II): step 2/2. It participates in nucleotide-sugar biosynthesis; UDP-N-acetyl-alpha-D-glucosamine biosynthesis; UDP-N-acetyl-alpha-D-glucosamine from N-acetyl-alpha-D-glucosamine 1-phosphate: step 1/1. It functions in the pathway bacterial outer membrane biogenesis; LPS lipid A biosynthesis. Catalyzes the last two sequential reactions in the de novo biosynthetic pathway for UDP-N-acetylglucosamine (UDP-GlcNAc). The C-terminal domain catalyzes the transfer of acetyl group from acetyl coenzyme A to glucosamine-1-phosphate (GlcN-1-P) to produce N-acetylglucosamine-1-phosphate (GlcNAc-1-P), which is converted into UDP-GlcNAc by the transfer of uridine 5-monophosphate (from uridine 5-triphosphate), a reaction catalyzed by the N-terminal domain. This Shewanella amazonensis (strain ATCC BAA-1098 / SB2B) protein is Bifunctional protein GlmU.